Reading from the N-terminus, the 397-residue chain is Probable peptidoglycan glycosyltransferase FtsW (397 aa).

The Cytoplasmic segment spans residues 1 to 26 (MSPRNSALERFRQHQKIPEKRWQRLA). A helical membrane pass occupies residues 27–47 (FPDVGLLLCWLALIVIGMVMV). Residues 48–69 (TSSSLSEAHVERLSTHHFAIRQ) are Periplasmic-facing. Residues 70–90 (GIFYVGSSIFAYIAFMLGTNF) traverse the membrane as a helical segment. Over 91 to 96 (YREKAK) the chain is Cytoplasmic. A helical transmembrane segment spans residues 97 to 117 (FILGLAFLGLLLVYAPGIGVV). Topologically, residues 118-126 (VNGSRRWLN) are periplasmic. A helical membrane pass occupies residues 127–147 (LGVINLQVGEFAKLAVFIFTA). The Cytoplasmic portion of the chain corresponds to 148–159 (AYLQHHTQRLDH). The helical transmembrane segment at 160 to 180 (SWQPIIGLLAVTACFALMFYL) threads the bilayer. Over 181–185 (QPDFG) the chain is Periplasmic. The helical transmembrane segment at 186–206 (TMVVIVATVLGMLFLSGVSIW) threads the bilayer. Arg-207 is a topological domain (cytoplasmic). A helical membrane pass occupies residues 208–228 (LLLLGVLIAPAMVWVLISESY). Residues 229–294 (RLRRLTTFIN…IFSIIAEETG (66 aa)) are Periplasmic-facing. Residues 295–315 (LVGALIVMAILMILVWRAFAI) traverse the membrane as a helical segment. Residues 316-328 (GYLADRMRKRFSS) are Cytoplasmic-facing. Residues 329 to 349 (LLAYGIGLWLGLQSLINIGVT) traverse the membrane as a helical segment. Residues 350 to 359 (TGALPTKGLT) are Periplasmic-facing. Residues 360–380 (LPLISYGGSSILMTSIALAIL) form a helical membrane-spanning segment. Residues 381–397 (ARIDAESRFIARLEGKI) lie on the Cytoplasmic side of the membrane.

The protein belongs to the SEDS family. FtsW subfamily.

The protein resides in the cell inner membrane. It carries out the reaction [GlcNAc-(1-&gt;4)-Mur2Ac(oyl-L-Ala-gamma-D-Glu-L-Lys-D-Ala-D-Ala)](n)-di-trans,octa-cis-undecaprenyl diphosphate + beta-D-GlcNAc-(1-&gt;4)-Mur2Ac(oyl-L-Ala-gamma-D-Glu-L-Lys-D-Ala-D-Ala)-di-trans,octa-cis-undecaprenyl diphosphate = [GlcNAc-(1-&gt;4)-Mur2Ac(oyl-L-Ala-gamma-D-Glu-L-Lys-D-Ala-D-Ala)](n+1)-di-trans,octa-cis-undecaprenyl diphosphate + di-trans,octa-cis-undecaprenyl diphosphate + H(+). The protein operates within cell wall biogenesis; peptidoglycan biosynthesis. Its function is as follows. Peptidoglycan polymerase that is essential for cell division. The chain is Probable peptidoglycan glycosyltransferase FtsW from Dichelobacter nodosus (strain VCS1703A).